The chain runs to 294 residues: Acetyl-coenzyme A carboxylase carboxyl transferase subunit beta (294 aa).

One can recognise a CoA carboxyltransferase N-terminal domain in the interval 29 to 294 (LWEKCPECGQ…TQEVKLQTNA (266 aa)). Zn(2+) is bound by residues cysteine 33, cysteine 36, cysteine 52, and cysteine 55. Residues 33-55 (CPECGQVVYRKDLIDNCSVCSNC) form a C4-type zinc finger.

The protein belongs to the AccD/PCCB family. As to quaternary structure, acetyl-CoA carboxylase is a heterohexamer composed of biotin carboxyl carrier protein (AccB), biotin carboxylase (AccC) and two subunits each of ACCase subunit alpha (AccA) and ACCase subunit beta (AccD). Requires Zn(2+) as cofactor.

The protein localises to the cytoplasm. It catalyses the reaction N(6)-carboxybiotinyl-L-lysyl-[protein] + acetyl-CoA = N(6)-biotinyl-L-lysyl-[protein] + malonyl-CoA. The protein operates within lipid metabolism; malonyl-CoA biosynthesis; malonyl-CoA from acetyl-CoA: step 1/1. Its function is as follows. Component of the acetyl coenzyme A carboxylase (ACC) complex. Biotin carboxylase (BC) catalyzes the carboxylation of biotin on its carrier protein (BCCP) and then the CO(2) group is transferred by the transcarboxylase to acetyl-CoA to form malonyl-CoA. This Prochlorococcus marinus (strain NATL1A) protein is Acetyl-coenzyme A carboxylase carboxyl transferase subunit beta.